The primary structure comprises 512 residues: ETS translocation variant 3 (512 aa).

A DNA-binding region (ETS) is located at residues 35 to 116 (IQLWHFILEL…KGKRFTYKFN (82 aa)). The segment at 136-222 (VPQSAPPVPT…NAIGGGGIGH (87 aa)) is disordered. Ser139, Ser159, and Ser315 each carry phosphoserine. The span at 158 to 184 (HSPTNDVQPGRFSASSLTASGQESSNG) shows a compositional bias: polar residues. The segment at 336-512 (PEESTQFSIK…QGLATAAADA (177 aa)) is disordered. Basic and acidic residues predominate over residues 380-406 (IKVEPASEKDPESLRQSAREKEEHTQE). Lys381 is covalently cross-linked (Glycyl lysine isopeptide (Lys-Gly) (interchain with G-Cter in SUMO2)). An N6-acetyllysine; alternate modification is found at Lys388. Residue Lys388 forms a Glycyl lysine isopeptide (Lys-Gly) (interchain with G-Cter in SUMO2); alternate linkage. Positions 443 to 452 (EPLEVTEDIE) are enriched in acidic residues. Composition is skewed to basic and acidic residues over residues 453-468 (DRPG…KEDA) and 479-491 (RWND…ELSK).

This sequence belongs to the ETS family.

The protein resides in the nucleus. Its function is as follows. Transcriptional repressor that contribute to growth arrest during terminal macrophage differentiation by repressing target genes involved in Ras-dependent proliferation. Represses MMP1 promoter activity. This is ETS translocation variant 3 (ETV3) from Pan troglodytes (Chimpanzee).